Consider the following 224-residue polypeptide: Imidazoleglycerol-phosphate dehydratase (224 aa).

Belongs to the imidazoleglycerol-phosphate dehydratase family.

It carries out the reaction D-erythro-1-(imidazol-4-yl)glycerol 3-phosphate = 3-(imidazol-4-yl)-2-oxopropyl phosphate + H2O. Its pathway is amino-acid biosynthesis; L-histidine biosynthesis; L-histidine from 5-phospho-alpha-D-ribose 1-diphosphate: step 6/9. This chain is Imidazoleglycerol-phosphate dehydratase (HIS3), found in Cyberlindnera jadinii (Torula yeast).